A 387-amino-acid chain; its full sequence is tRNA-specific 2-thiouridylase MnmA (387 aa).

Residues 34 to 41 (AMSGGVDS) and Met-60 each bind ATP. Cys-127 functions as the Nucleophile in the catalytic mechanism. Cys-127 and Cys-223 are joined by a disulfide. Gly-151 contacts ATP. The segment at 173 to 175 (KDQ) is interaction with tRNA. Cys-223 functions as the Cysteine persulfide intermediate in the catalytic mechanism.

The protein belongs to the MnmA/TRMU family.

It localises to the cytoplasm. The enzyme catalyses S-sulfanyl-L-cysteinyl-[protein] + uridine(34) in tRNA + AH2 + ATP = 2-thiouridine(34) in tRNA + L-cysteinyl-[protein] + A + AMP + diphosphate + H(+). Catalyzes the 2-thiolation of uridine at the wobble position (U34) of tRNA, leading to the formation of s(2)U34. This is tRNA-specific 2-thiouridylase MnmA from Anaplasma marginale (strain St. Maries).